We begin with the raw amino-acid sequence, 209 residues long: Imidazoleglycerol-phosphate dehydratase (209 aa).

Belongs to the imidazoleglycerol-phosphate dehydratase family.

Its subcellular location is the cytoplasm. It catalyses the reaction D-erythro-1-(imidazol-4-yl)glycerol 3-phosphate = 3-(imidazol-4-yl)-2-oxopropyl phosphate + H2O. It functions in the pathway amino-acid biosynthesis; L-histidine biosynthesis; L-histidine from 5-phospho-alpha-D-ribose 1-diphosphate: step 6/9. The polypeptide is Imidazoleglycerol-phosphate dehydratase (Microcystis aeruginosa (strain NIES-843 / IAM M-2473)).